The sequence spans 644 residues: uncharacterized protein (644 aa).

254-261 (GKMGAGKS) lines the ATP pocket.

This is an uncharacterized protein from Bacillus anthracis.